A 120-amino-acid polypeptide reads, in one-letter code: NAD(P)H-quinone oxidoreductase subunit 3, chloroplastic (120 aa).

The next 3 helical transmembrane spans lie at 9-29, 64-84, and 88-108; these read IFWA…LFSG, MFAL…PWAM, and ILGV…IVGL.

This sequence belongs to the complex I subunit 3 family. As to quaternary structure, NDH is composed of at least 16 different subunits, 5 of which are encoded in the nucleus.

The protein resides in the plastid. The protein localises to the chloroplast thylakoid membrane. It carries out the reaction a plastoquinone + NADH + (n+1) H(+)(in) = a plastoquinol + NAD(+) + n H(+)(out). The enzyme catalyses a plastoquinone + NADPH + (n+1) H(+)(in) = a plastoquinol + NADP(+) + n H(+)(out). NDH shuttles electrons from NAD(P)H:plastoquinone, via FMN and iron-sulfur (Fe-S) centers, to quinones in the photosynthetic chain and possibly in a chloroplast respiratory chain. The immediate electron acceptor for the enzyme in this species is believed to be plastoquinone. Couples the redox reaction to proton translocation, and thus conserves the redox energy in a proton gradient. This Spinacia oleracea (Spinach) protein is NAD(P)H-quinone oxidoreductase subunit 3, chloroplastic.